Here is a 148-residue protein sequence, read N- to C-terminus: Nucleoside diphosphate kinase A (148 aa).

6 residues coordinate ATP: lysine 9, phenylalanine 57, arginine 85, threonine 91, arginine 102, and asparagine 112. Histidine 115 (pros-phosphohistidine intermediate) is an active-site residue.

Belongs to the NDK family. Requires Mg(2+) as cofactor.

The enzyme catalyses a 2'-deoxyribonucleoside 5'-diphosphate + ATP = a 2'-deoxyribonucleoside 5'-triphosphate + ADP. It catalyses the reaction a ribonucleoside 5'-diphosphate + ATP = a ribonucleoside 5'-triphosphate + ADP. Major role in the synthesis of nucleoside triphosphates other than ATP. The ATP gamma phosphate is transferred to the NDP beta phosphate via a ping-pong mechanism, using a phosphorylated active-site intermediate. The chain is Nucleoside diphosphate kinase A from Flaveria bidentis (Coastal plain yellowtops).